A 346-amino-acid polypeptide reads, in one-letter code: Methylthioribose-1-phosphate isomerase (346 aa).

Substrate-binding positions include 48–50, Arg88, and Gln192; that span reads RGA. Residue Asp233 is the Proton donor of the active site. Residue 243–244 participates in substrate binding; the sequence is NK.

It belongs to the eIF-2B alpha/beta/delta subunits family. MtnA subfamily.

It catalyses the reaction 5-(methylsulfanyl)-alpha-D-ribose 1-phosphate = 5-(methylsulfanyl)-D-ribulose 1-phosphate. The protein operates within amino-acid biosynthesis; L-methionine biosynthesis via salvage pathway; L-methionine from S-methyl-5-thio-alpha-D-ribose 1-phosphate: step 1/6. In terms of biological role, catalyzes the interconversion of methylthioribose-1-phosphate (MTR-1-P) into methylthioribulose-1-phosphate (MTRu-1-P). This Alcanivorax borkumensis (strain ATCC 700651 / DSM 11573 / NCIMB 13689 / SK2) protein is Methylthioribose-1-phosphate isomerase.